The sequence spans 453 residues: Adenosylmethionine-8-amino-7-oxononanoate aminotransferase (453 aa).

Residue 118–119 (GS) coordinates pyridoxal 5'-phosphate. Y151 is a binding site for substrate. Pyridoxal 5'-phosphate is bound at residue D258. K287, G322, and R417 together coordinate substrate. K287 carries the post-translational modification N6-(pyridoxal phosphate)lysine.

The protein belongs to the class-III pyridoxal-phosphate-dependent aminotransferase family. BioA subfamily. As to quaternary structure, homodimer. It depends on pyridoxal 5'-phosphate as a cofactor.

It localises to the cytoplasm. It catalyses the reaction (8S)-8-amino-7-oxononanoate + S-adenosyl-L-methionine = S-adenosyl-4-methylsulfanyl-2-oxobutanoate + (7R,8S)-7,8-diammoniononanoate. It functions in the pathway cofactor biosynthesis; biotin biosynthesis; 7,8-diaminononanoate from 8-amino-7-oxononanoate (SAM route): step 1/1. Its function is as follows. Catalyzes the transfer of the alpha-amino group from S-adenosyl-L-methionine (SAM) to 7-keto-8-aminopelargonic acid (KAPA) to form 7,8-diaminopelargonic acid (DAPA). It is the only aminotransferase known to utilize SAM as an amino donor. This chain is Adenosylmethionine-8-amino-7-oxononanoate aminotransferase, found in Geobacter sulfurreducens (strain ATCC 51573 / DSM 12127 / PCA).